The primary structure comprises 97 residues: Large ribosomal subunit protein bL31B (97 aa).

This sequence belongs to the bacterial ribosomal protein bL31 family. Type B subfamily. Part of the 50S ribosomal subunit.

This is Large ribosomal subunit protein bL31B (rpmE2) from Mycolicibacterium paratuberculosis (strain ATCC BAA-968 / K-10) (Mycobacterium paratuberculosis).